Consider the following 218-residue polypeptide: Glutathione S-transferase class-mu 26 kDa isozyme (218 aa).

Residues 1–83 (MAPKFGYWKV…YIADKHNMLG (83 aa)) form the GST N-terminal domain. Glutathione is bound by residues 7-8 (YW), 41-45 (WSNDK), 54-55 (NL), and 67-68 (QS). A GST C-terminal domain is found at 85–203 (CPKERAEISM…NSSRYIKWPL (119 aa)). Tyrosine 111 lines the substrate pocket.

The protein belongs to the GST superfamily. Mu family. Homodimer. In terms of tissue distribution, tegument and in subtegumentary parenchymal cells. GST 26 may be actively excreted by adult worms.

It catalyses the reaction RX + glutathione = an S-substituted glutathione + a halide anion + H(+). Conjugation of reduced glutathione to a wide number of exogenous and endogenous hydrophobic electrophiles. In terms of biological role, GST isoenzymes appear to play a central role in the parasite detoxification system. Other functions are also suspected including a role in increasing the solubility of haematin in the parasite gut. In Schistosoma mansoni (Blood fluke), this protein is Glutathione S-transferase class-mu 26 kDa isozyme.